We begin with the raw amino-acid sequence, 101 residues long: Large ribosomal subunit protein uL23 (101 aa).

This sequence belongs to the universal ribosomal protein uL23 family. As to quaternary structure, part of the 50S ribosomal subunit. Contacts protein L29, and trigger factor when it is bound to the ribosome.

In terms of biological role, one of the early assembly proteins it binds 23S rRNA. One of the proteins that surrounds the polypeptide exit tunnel on the outside of the ribosome. Forms the main docking site for trigger factor binding to the ribosome. The sequence is that of Large ribosomal subunit protein uL23 from Pseudarthrobacter chlorophenolicus (strain ATCC 700700 / DSM 12829 / CIP 107037 / JCM 12360 / KCTC 9906 / NCIMB 13794 / A6) (Arthrobacter chlorophenolicus).